A 340-amino-acid chain; its full sequence is Mitochondrial calcium uniporter regulator 1 (340 aa).

Residues 1 to 44 form a disordered region; sequence MDSGSVAAERPRRTPSRQRLPSSGCGVPARPGVSTLPGGRSWLR. Over 1–54 the chain is Mitochondrial intermembrane; that stretch reads MDSGSVAAERPRRTPSRQRLPSSGCGVPARPGVSTLPGGRSWLRPRGRAARASP. Residues 55–74 traverse the membrane as a helical segment; sequence LLFLLLVPSPRLAATATATA. The Mitochondrial matrix segment spans residues 75 to 316; it reads PRRTLAERSR…KTMLEAHKLD (242 aa). Residues 197-291 are a coiled coil; sequence ALQQVLSKIA…VSLHAQQDRA (95 aa). The residue at position 204 (lysine 204) is an N6-acetyllysine. Residues 317–339 traverse the membrane as a helical segment; the sequence is TIKYLAGSVFTCLTVALGFYRLW. Residue isoleucine 340 is a topological domain, mitochondrial intermembrane.

It belongs to the CCDC90 family. In terms of assembly, interacts (via coiled coil regions) with MCU; the interaction is direct. Interacts with SMDT1/EMRE; the interaction is direct. Interacts with PPIF.

Its subcellular location is the mitochondrion inner membrane. Its function is as follows. Key regulator of mitochondrial calcium uniporter (MCU) required for calcium entry into mitochondrion. Plays a direct role in uniporter-mediated calcium uptake via a direct interaction with MCU. Probably involved in the assembly of the membrane components of the uniporter complex (uniplex). In Mus musculus (Mouse), this protein is Mitochondrial calcium uniporter regulator 1.